A 285-amino-acid polypeptide reads, in one-letter code: Cell division protein ZipA (285 aa).

Residue M1 is a topological domain, periplasmic. The chain crosses the membrane as a helical span at residues E2 to F22. At D23–R285 the chain is on the cytoplasmic side. The interval A49 to R88 is disordered.

Belongs to the ZipA family. As to quaternary structure, interacts with FtsZ via their C-terminal domains.

Its subcellular location is the cell inner membrane. In terms of biological role, essential cell division protein that stabilizes the FtsZ protofilaments by cross-linking them and that serves as a cytoplasmic membrane anchor for the Z ring. Also required for the recruitment to the septal ring of downstream cell division proteins. The protein is Cell division protein ZipA of Azotobacter vinelandii (strain DJ / ATCC BAA-1303).